A 662-amino-acid chain; its full sequence is High affinity sulfate transporter 2 (662 aa).

Positions 1–35 (MSQRVSDQAMAEVIAETRTNSSSRRHGGGDDTPSL) are disordered. A run of 12 helical transmembrane segments spans residues 103–123 (GDFI…LAYA), 128–148 (LDPW…AFMG), 153–173 (IAIG…SNEI), 182–202 (LRLA…LGVC), 205–225 (GFLI…GAAI), 264–284 (WETI…KYIA), 291–311 (FWVS…FVYI), 346–366 (AGVR…MAIG), 383–403 (MVAM…VTTG), 420–440 (VSNI…TPLF), 447–467 (VLAS…AMVL), and 481–501 (GAFF…AVAI). The 124-residue stretch at 532 to 655 (QYPKAEQIPG…LTVADAVATY (124 aa)) folds into the STAS domain.

This sequence belongs to the SLC26A/SulP transporter (TC 2.A.53) family.

It localises to the membrane. Its function is as follows. High-affinity H(+)/sulfate cotransporter that mediates the uptake of sulfate by plant roots from low concentrations of sulfate in the soil solution. This is High affinity sulfate transporter 2 (ST2) from Stylosanthes hamata (Caribbean stylo).